A 147-amino-acid chain; its full sequence is Nucleoside diphosphate kinase (147 aa).

6 residues coordinate ATP: Lys11, Phe59, Arg87, Thr93, Arg104, and Asn114. The active-site Pros-phosphohistidine intermediate is His117.

The protein belongs to the NDK family. In terms of assembly, homotetramer. Mg(2+) serves as cofactor.

The protein localises to the cytoplasm. It catalyses the reaction a 2'-deoxyribonucleoside 5'-diphosphate + ATP = a 2'-deoxyribonucleoside 5'-triphosphate + ADP. The catalysed reaction is a ribonucleoside 5'-diphosphate + ATP = a ribonucleoside 5'-triphosphate + ADP. In terms of biological role, major role in the synthesis of nucleoside triphosphates other than ATP. The ATP gamma phosphate is transferred to the NDP beta phosphate via a ping-pong mechanism, using a phosphorylated active-site intermediate. The polypeptide is Nucleoside diphosphate kinase (Anaeromyxobacter dehalogenans (strain 2CP-C)).